A 70-amino-acid chain; its full sequence is Protein SlyX homolog (70 aa).

This sequence belongs to the SlyX family.

This Shewanella denitrificans (strain OS217 / ATCC BAA-1090 / DSM 15013) protein is Protein SlyX homolog.